We begin with the raw amino-acid sequence, 353 residues long: D-alanine--D-alanine ligase (353 aa).

Residues 141–349 (KAALAGAGLA…LEQLVHELLE (209 aa)) enclose the ATP-grasp domain. 176–231 (ESGLCYPCFIKPANLGSSVGISKARNREELIHGLRLAATLDPRLVVEQGVQARELE) lines the ATP pocket. Mg(2+)-binding residues include Asp302, Glu316, and Asn318.

Belongs to the D-alanine--D-alanine ligase family. It depends on Mg(2+) as a cofactor. Mn(2+) serves as cofactor.

Its subcellular location is the cytoplasm. It carries out the reaction 2 D-alanine + ATP = D-alanyl-D-alanine + ADP + phosphate + H(+). It participates in cell wall biogenesis; peptidoglycan biosynthesis. Cell wall formation. The chain is D-alanine--D-alanine ligase from Parasynechococcus marenigrum (strain WH8102).